Consider the following 409-residue polypeptide: Peptidase T (409 aa).

Histidine 78 is a binding site for Zn(2+). Aspartate 80 is an active-site residue. Position 140 (aspartate 140) interacts with Zn(2+). The active-site Proton acceptor is glutamate 174. 3 residues coordinate Zn(2+): glutamate 175, aspartate 197, and histidine 379.

Belongs to the peptidase M20B family. Zn(2+) is required as a cofactor.

The protein resides in the cytoplasm. It carries out the reaction Release of the N-terminal residue from a tripeptide.. Its function is as follows. Cleaves the N-terminal amino acid of tripeptides. The chain is Peptidase T from Aliivibrio fischeri (strain ATCC 700601 / ES114) (Vibrio fischeri).